A 100-amino-acid polypeptide reads, in one-letter code: UPF0213 protein YhbQ (100 aa).

The 76-residue stretch at 2 to 77 folds into the GIY-YIG domain; it reads TPWYLYLIRT…KQLTKRQKER (76 aa).

Belongs to the UPF0213 family.

The protein is UPF0213 protein YhbQ of Escherichia coli O8 (strain IAI1).